Reading from the N-terminus, the 223-residue chain is 7-carboxy-7-deazaguanine synthase (223 aa).

Residues 12–14 (LQG) and R27 contribute to the substrate site. Residues 18–223 (FTGVPAIFIR…MQTHKYLNIA (206 aa)) enclose the Radical SAM core domain. [4Fe-4S] cluster-binding residues include C31, C35, and C38. Position 40 (T40) interacts with Mg(2+). Position 92 (T92) interacts with substrate. Residues G94 and 136-138 (SPK) each bind S-adenosyl-L-methionine.

Belongs to the radical SAM superfamily. 7-carboxy-7-deazaguanine synthase family. Homodimer. [4Fe-4S] cluster is required as a cofactor. The cofactor is S-adenosyl-L-methionine. It depends on Mg(2+) as a cofactor.

It carries out the reaction 6-carboxy-5,6,7,8-tetrahydropterin + H(+) = 7-carboxy-7-deazaguanine + NH4(+). It functions in the pathway purine metabolism; 7-cyano-7-deazaguanine biosynthesis. Catalyzes the complex heterocyclic radical-mediated conversion of 6-carboxy-5,6,7,8-tetrahydropterin (CPH4) to 7-carboxy-7-deazaguanine (CDG), a step common to the biosynthetic pathways of all 7-deazapurine-containing compounds. This Escherichia coli (strain K12) protein is 7-carboxy-7-deazaguanine synthase.